The sequence spans 305 residues: Fatty acid elongase 1 (305 aa).

A run of 7 helical transmembrane segments spans residues 24–44 (MIAN…FVFI), 80–100 (VVWN…VTPV), 129–149 (FWMG…IFLV), 158–178 (FLHW…YCVG), 183–203 (IWVA…FALA), 217–237 (YITI…IFAL), and 257–277 (IQLV…VASY). A HxxHH motif motif is present at residues 160–164 (HWYHH). The active-site Nucleophile is His163. The disordered stretch occupies residues 284–305 (PTVGGPSSTAGVSNGSVEKKVK). A compositionally biased stretch (polar residues) spans 288–299 (GPSSTAGVSNGS). An N-linked (GlcNAc...) asparagine glycan is attached at Asn297.

The protein belongs to the ELO family.

The protein resides in the endoplasmic reticulum membrane. The catalysed reaction is an acyl-CoA + malonyl-CoA + H(+) = a 3-oxoacyl-CoA + CO2 + CoA. The protein operates within lipid metabolism; fatty acid biosynthesis. Involved in the synthesis of fatty acids. Elongates C4 fatty acids to C10. This chain is Fatty acid elongase 1, found in Trypanosoma brucei brucei (strain 927/4 GUTat10.1).